A 235-amino-acid polypeptide reads, in one-letter code: MIPWLTDRPAFPPVERALTEPNGLLAAGGRLTPEWLLAAYRRGIFPWYSDGEPILWWSPDPRLVLQPAQIRITRSLRKVLRGRRFEVRFDTAFARVIEECAAPREPGGGTWITPEIRAAYLRMHELGYAHSVESWLDGRLVGGLYGMALGRAFFGESMFSRVSDASKVALAHLARFLEQRDFGVIDCQMTTPHLLSMGAHEIARREFCAGLERWTVEGPPPAKWSGTTAAEFDWN.

The protein belongs to the L/F-transferase family.

The protein localises to the cytoplasm. The enzyme catalyses N-terminal L-lysyl-[protein] + L-leucyl-tRNA(Leu) = N-terminal L-leucyl-L-lysyl-[protein] + tRNA(Leu) + H(+). It catalyses the reaction N-terminal L-arginyl-[protein] + L-leucyl-tRNA(Leu) = N-terminal L-leucyl-L-arginyl-[protein] + tRNA(Leu) + H(+). It carries out the reaction L-phenylalanyl-tRNA(Phe) + an N-terminal L-alpha-aminoacyl-[protein] = an N-terminal L-phenylalanyl-L-alpha-aminoacyl-[protein] + tRNA(Phe). Its function is as follows. Functions in the N-end rule pathway of protein degradation where it conjugates Leu, Phe and, less efficiently, Met from aminoacyl-tRNAs to the N-termini of proteins containing an N-terminal arginine or lysine. The polypeptide is Leucyl/phenylalanyl-tRNA--protein transferase (Azoarcus sp. (strain BH72)).